The primary structure comprises 1075 residues: Disheveled-associated activator of morphogenesis 2 (1075 aa).

The GBD/FH3 domain occupies 40–416; it reads VPIPPTEELN…QIVLQDERGD (377 aa). Positions 437–517 form a coiled coil; the sequence is NENEVKQWRD…VAQLNEYSQG (81 aa). Disordered stretches follow at residues 517–611, 1006–1025, and 1048–1075; these read GGSI…IPQP, KEQR…SISE, and SKLK…KLNY. A compositionally biased stretch (pro residues) spans 523–532; it reads PAPPPPPPGG. Residues 533–544 are compositionally biased toward low complexity; that stretch reads PLALSSALSSAL. The span at 550–581 shows a compositional bias: pro residues; it reads PPLPPPLPFSSCPPPPAPPPPPGGPPPPPGAP. The FH2 domain occupies 605–1075; sequence KKSIPQPSHP…RERVVTKLNY (471 aa). Residues 1025–1075 enclose the DAD domain; the sequence is EETGEFDDLVSALRSGEVFDKDLSKLKRNRKRSGNQGLETSRERVVTKLNY. Residues 1064 to 1075 are compositionally biased toward basic and acidic residues; that stretch reads TSRERVVTKLNY.

The protein belongs to the formin homology family. In terms of tissue distribution, expressed in progenitor populations of the embryonic spinal cord (at protein level).

Functionally, key regulator of the Wnt signaling pathway, which is required for various processes during development, such as dorsal patterning, determination of left/right symmetry or myelination in the central nervous system. Acts downstream of Wnt ligands and upstream of beta-catenin (CTNNB1). Required for canonical Wnt signaling pathway during patterning in the dorsal spinal cord by promoting the aggregation of Disheveled (Dvl) complexes, thereby clustering and formation of Wnt receptor signalosomes and potentiating Wnt activity. During dorsal patterning of the spinal cord, inhibits oligodendrocytes differentiation via interaction with PIP5K1A. Also regulates non-canonical Wnt signaling pathway. Acts downstream of PITX2 in the developing gut and is required for left/right asymmetry within dorsal mesentery: affects mesenchymal condensation by lengthening cadherin-based junctions through WNT5A and non-canonical Wnt signaling, inducing polarized condensation in the left dorsal mesentery necessary to initiate gut rotation. Together with DAAM1, required for myocardial maturation and sarcomere assembly. The protein is Disheveled-associated activator of morphogenesis 2 of Gallus gallus (Chicken).